Here is a 202-residue protein sequence, read N- to C-terminus: U-Kazal-Dg21.2 (202 aa).

Positions 1 to 20 (MKYFLWSAVTIFAIVNVVGA) are cleaved as a signal peptide. Residues 21–87 (KNSDFDPRCL…SFCQVEEDFD (67 aa)) constitute a propeptide that is removed on maturation. Kazal-like domains are found at residues 23-77 (SDFD…KTLM), 85-140 (DFDS…ICRN), and 148-202 (IDPK…KGEC). Intrachain disulfides connect Cys-29–Cys-62, Cys-33–Cys-55, Cys-91–Cys-124, Cys-95–Cys-117, and Cys-103–Cys-138. Asn-140 carries an N-linked (GlcNAc...) asparagine glycan. A propeptide spanning residues 142–202 (SFKSELIDPK…NWTLIRKGEC (61 aa)) is cleaved from the precursor. Disulfide bonds link Cys-154–Cys-187, Cys-158–Cys-180, and Cys-166–Cys-202. Asn-193 is a glycosylation site (N-linked (GlcNAc...) asparagine).

Expressed by the venom gland.

Its subcellular location is the secreted. Functionally, may act as a serine protease inhibitor, since it possess the kazal serine protease inhibitor signature. The recombinant peptide does not produce toxic effects on insects. This chain is U-Kazal-Dg21.2, found in Dolopus genitalis (Giant Australian assassin fly).